Consider the following 235-residue polypeptide: MFDPFLDQLHADITARGGTPAEVPDGLAECHSAKGASVIRSWLWQVPGFRRWRVTRLDAGESLQVLNSVAYPDYGFDHPLMGVDLLWFGARQKLVAVLDFQPLVQNEAYFDRYFDGLKALNRQFPDLNGEETMRSFDPNQYFSSWLLFCRGGAEQAQTSLPPAFSAFLKAYWALHDAAKNNPATIAADEVKRLQENYDVYSAERDPAHGLFTSHFGKNWSDQFLHEFLFPASGQS.

Belongs to the HY2 family.

It catalyses the reaction 15,16-dihydrobiliverdin + oxidized 2[4Fe-4S]-[ferredoxin] = biliverdin IXalpha + reduced 2[4Fe-4S]-[ferredoxin] + 2 H(+). Its function is as follows. Catalyzes the two-electron reduction of biliverdin IX-alpha at the C15 methine bridge. In Synechococcus sp. (strain CC9902), this protein is 15,16-dihydrobiliverdin:ferredoxin oxidoreductase.